The chain runs to 364 residues: CLIP domain-containing serine protease B15 (364 aa).

Positions 1–19 are cleaved as a signal peptide; it reads MRWLVCLIVSWCSLVPLGA. One can recognise a Clip domain in the interval 30–89; it reads PCQTPSGTAGTCEPVKNCSYVRKILKSPDFSHYDTTYLDTLKCGDLMVPMRKKPIPLLCC. Cystine bridges form between cysteine 31–cysteine 88, cysteine 41–cysteine 72, and cysteine 47–cysteine 89. Asparagine 46 carries N-linked (GlcNAc...) asparagine glycosylation. A Peptidase S1 domain is found at 107–359; sequence IYFGEETERG…YLDWMETVMF (253 aa). Asparagine 131 is a glycosylation site (N-linked (GlcNAc...) asparagine). A disulfide bridge links cysteine 137 with cysteine 153. Catalysis depends on histidine 152, which acts as the Charge relay system. 3 N-linked (GlcNAc...) asparagine glycosylation sites follow: asparagine 171, asparagine 177, and asparagine 206. The active-site Charge relay system is aspartate 212. An intrachain disulfide couples cysteine 279 to cysteine 296. 2 N-linked (GlcNAc...) asparagine glycosylation sites follow: asparagine 287 and asparagine 301. A disulfide bridge links cysteine 306 with cysteine 335. Serine 310 serves as the catalytic Charge relay system.

This sequence belongs to the peptidase S1 family. CLIP subfamily. Post-translationally, N-glycosylated. In terms of processing, proteolytically cleaved. Expressed by a subpopulation of hemocytes.

It localises to the secreted. Functionally, serine protease. Plays a role in innate immunity against infections by parasite P.berghei and by Gram-negative bacteria such as E.coli. In response to P.berghei infection, contributes to the clearing of parasite ookinetes independent of melanization, an innate immune response which consists in the deposition of melanin pigments on invading pathogens and parasites. The polypeptide is CLIP domain-containing serine protease B15 (Anopheles gambiae (African malaria mosquito)).